The primary structure comprises 366 residues: Spermidine/putrescine import ATP-binding protein PotA (366 aa).

The 232-residue stretch at 8–239 (IRFENVTKQF…PINKFVADFI (232 aa)) folds into the ABC transporter domain. An ATP-binding site is contributed by 41-48 (GPSGCGKT).

Belongs to the ABC transporter superfamily. Spermidine/putrescine importer (TC 3.A.1.11.1) family. In terms of assembly, the complex is composed of two ATP-binding proteins (PotA), two transmembrane proteins (PotB and PotC) and a solute-binding protein (PotD).

The protein localises to the cell membrane. The enzyme catalyses ATP + H2O + polyamine-[polyamine-binding protein]Side 1 = ADP + phosphate + polyamineSide 2 + [polyamine-binding protein]Side 1.. Part of the ABC transporter complex PotABCD involved in spermidine/putrescine import. Responsible for energy coupling to the transport system. The sequence is that of Spermidine/putrescine import ATP-binding protein PotA from Listeria monocytogenes serotype 4b (strain F2365).